We begin with the raw amino-acid sequence, 420 residues long: uncharacterized protein (420 aa).

The next 6 membrane-spanning stretches (helical) occupy residues 26–46 (IFLL…QSVI), 66–86 (SAIK…WFTF), 231–251 (VILA…ATVL), 276–296 (IPVN…PSLL), 317–337 (GFLV…SIAF), and 369–389 (IDIL…FLTI).

It belongs to the CbiQ family.

It is found in the cell membrane. This is an uncharacterized protein from Mycoplasma genitalium (strain ATCC 33530 / DSM 19775 / NCTC 10195 / G37) (Mycoplasmoides genitalium).